The sequence spans 700 residues: Putative glutamine-dependent NAD(+) synthetase (700 aa).

The region spanning 5–275 (VTIASCQLNQ…VEVISATVDV (271 aa)) is the CN hydrolase domain. Residue Glu45 is the Proton acceptor; for glutaminase activity of the active site. The For glutaminase activity role is filled by Lys114. Cys175 functions as the Nucleophile; for glutaminase activity in the catalytic mechanism. Positions 327-700 (IPLPEEEITF…ASKFEQHQRK (374 aa)) are ligase. 357–364 (PLSGGLDS) is an ATP binding site. The active site involves Ser359.

This sequence in the C-terminal section; belongs to the NAD synthetase family.

It carries out the reaction deamido-NAD(+) + L-glutamine + ATP + H2O = L-glutamate + AMP + diphosphate + NAD(+) + H(+). It participates in cofactor biosynthesis; NAD(+) biosynthesis; NAD(+) from deamido-NAD(+) (L-Gln route): step 1/1. This chain is Putative glutamine-dependent NAD(+) synthetase, found in Schizosaccharomyces pombe (strain 972 / ATCC 24843) (Fission yeast).